The primary structure comprises 133 residues: Putative pre-16S rRNA nuclease (133 aa).

This sequence belongs to the YqgF nuclease family.

The protein resides in the cytoplasm. Functionally, could be a nuclease involved in processing of the 5'-end of pre-16S rRNA. The protein is Putative pre-16S rRNA nuclease of Dehalococcoides mccartyi (strain ATCC BAA-2266 / KCTC 15142 / 195) (Dehalococcoides ethenogenes (strain 195)).